The sequence spans 562 residues: MRVLLASLLIFGACWAGPVVNTNYGKVEGFEYGAAEVFLAIPFAKPPVDNLRFEKPEAPEPWEDVYQATQFRNDCTPHYRLVAQFSSYSGEDCLTLNVIKPKTIEKKLPVLFWVHGGGYEIGSGSQHGYEFFADRYTSQGVIVVTIQYRLGFMGFFSEGTSDAPGNYGLFDQAAALRFVKENIGNFGGDPDDITIWGYSAGAASVSQLTMSPYTHDLYSKAIIMSASSFVGWATGPNVIDTSKQLAEILGCPWPGAKECMKKKTLHEIFDAVETQGWTTGTIDILRWSPVIDGDYLPKNPENLINDAPIKPTLIGMSNKEGSYFATMNMGRVIADFGLSPEEIPKVDEDFISEIIDRKLLYNNRYGENRQKVWDQILDYYTKQGKPERDLNGFYVDRYAELLSDITFNVPILREITARVERKTPVWTYRFDHYNEQIWKKYIPEQAKGSPHANEYHYLFNMPVMAQIDFKKEPESWLQRDLIDMVVSFAKTGVPHIQDVEWRPVSDPDDVNFLNFQSSGVSVKHGLFQEPLDFWNNLREREGFDLVDPAYSKTTSNSEKDEL.

An N-terminal signal peptide occupies residues 1–16 (MRVLLASLLIFGACWA). A disulfide bridge connects residues cysteine 75 and cysteine 93. Serine 199 acts as the Acyl-ester intermediate in catalysis. Cysteine 251 and cysteine 259 are disulfide-bonded. Residues glutamate 320 and histidine 451 each act as charge relay system in the active site. A Prevents secretion from ER motif is present at residues 559–562 (KDEL).

This sequence belongs to the type-B carboxylesterase/lipase family. In terms of tissue distribution, expressed only in the intestine.

Its subcellular location is the endoplasmic reticulum lumen. It carries out the reaction a carboxylic ester + H2O = an alcohol + a carboxylate + H(+). The sequence is that of Gut esterase 1 (ges-1) from Caenorhabditis briggsae.